We begin with the raw amino-acid sequence, 261 residues long: Hemin import ATP-binding protein HmuV (261 aa).

Residues 8-243 form the ABC transporter domain; the sequence is IRVTDLSYSV…ESIRTAYGHE (236 aa). 40–47 lines the ATP pocket; sequence GRNGAGKS.

Belongs to the ABC transporter superfamily. Heme (hemin) importer (TC 3.A.1.14.5) family. As to quaternary structure, the complex is composed of two ATP-binding proteins (HmuV), two transmembrane proteins (HmuU) and a solute-binding protein (HmuT).

It is found in the cell membrane. Functionally, part of the ABC transporter complex HmuTUV involved in hemin import. Responsible for energy coupling to the transport system. This chain is Hemin import ATP-binding protein HmuV, found in Deinococcus radiodurans (strain ATCC 13939 / DSM 20539 / JCM 16871 / CCUG 27074 / LMG 4051 / NBRC 15346 / NCIMB 9279 / VKM B-1422 / R1).